A 493-amino-acid polypeptide reads, in one-letter code: Guanosine-5'-triphosphate,3'-diphosphate pyrophosphatase (493 aa).

Belongs to the GppA/Ppx family. GppA subfamily.

The enzyme catalyses guanosine 3'-diphosphate 5'-triphosphate + H2O = guanosine 3',5'-bis(diphosphate) + phosphate + H(+). Its pathway is purine metabolism; ppGpp biosynthesis; ppGpp from GTP: step 2/2. In terms of biological role, catalyzes the conversion of pppGpp to ppGpp. Guanosine pentaphosphate (pppGpp) is a cytoplasmic signaling molecule which together with ppGpp controls the 'stringent response', an adaptive process that allows bacteria to respond to amino acid starvation, resulting in the coordinated regulation of numerous cellular activities. In Salmonella choleraesuis (strain SC-B67), this protein is Guanosine-5'-triphosphate,3'-diphosphate pyrophosphatase.